We begin with the raw amino-acid sequence, 212 residues long: MSCRRGALIVLEGVDRAGKTTQCQKLVQAIQQSGRAAEIMRFPDRTTKIGQLISSYLEKKSNLEDHTVHLLFSANRWEMVPVMKQKLEEGINLVVDRYAFSGVAFTSAKPGFSLEWCMNPDVGLPKPDLVMFLQLNPNVAANRGEYGNERYETSAFQRTVQQRFEELMQDTSINWKVIDAARTIEEVHKDIKDLSENIISLAEEQPVGELWR.

ATP-binding positions include 16–21 (RAGKTT), Arg97, Arg182, and Lys192.

Belongs to the thymidylate kinase family. It depends on Mg(2+) as a cofactor.

It catalyses the reaction dTMP + ATP = dTDP + ADP. Its pathway is pyrimidine metabolism; dTTP biosynthesis. Its function is as follows. Catalyzes the phosphorylation of thymidine monophosphate (dTMP) to thymidine diphosphate (dTDP), the immediate precursor for the DNA building block dTTP, with ATP as the preferred phosphoryl donor in the presence of Mg(2+). The polypeptide is Thymidylate kinase (dtymk) (Danio rerio (Zebrafish)).